The sequence spans 189 residues: Interferon alpha-D (189 aa).

The signal sequence occupies residues 1–23; it reads MAPAWSLLLALLLLSCNAICSLG. Cystine bridges form between Cys-24-Cys-122 and Cys-52-Cys-162.

This sequence belongs to the alpha/beta interferon family.

The protein resides in the secreted. Produced by macrophages, IFN-alpha have antiviral activities. Interferon stimulates the production of two enzymes: a protein kinase and an oligoadenylate synthetase. The chain is Interferon alpha-D (IFNAD) from Bos taurus (Bovine).